Reading from the N-terminus, the 136-residue chain is Cytokine-like protein 1 (136 aa).

The first 22 residues, 1–22 (MRTPGPLPVLLLLLAGAPAARP), serve as a signal peptide directing secretion.

In terms of tissue distribution, specifically expressed in CD34+ hematopoietic cells.

It localises to the secreted. This is Cytokine-like protein 1 (CYTL1) from Homo sapiens (Human).